Here is a 277-residue protein sequence, read N- to C-terminus: MAVKKFNPITPARRQMTMPTFEEITSQEPEKSLLVALKSKAGRNAQGKITVRHRGGGVKRKYRIIDFKRNKDEIPAKVATIEYDPNRSAYIALAIYSDGEKRYILAPAGLKVGDVIESGVNADIKPGNALPLKNIPVGTVIHNIELQRGKGGQLVRAAGGSAQLMAKEGDYATLRLPSGEMRYVRIECRATIGTLSNATNDIVNIGKAGRKRHMGWRPTVRGSVMNPNDHPHGGGEGKSPVGRPSPVTPWGKPALGYKTRKTKKYSDKFIIKDRRAK.

The interval 222-259 (GSVMNPNDHPHGGGEGKSPVGRPSPVTPWGKPALGYKT) is disordered.

It belongs to the universal ribosomal protein uL2 family. As to quaternary structure, part of the 50S ribosomal subunit. Forms a bridge to the 30S subunit in the 70S ribosome.

One of the primary rRNA binding proteins. Required for association of the 30S and 50S subunits to form the 70S ribosome, for tRNA binding and peptide bond formation. It has been suggested to have peptidyltransferase activity; this is somewhat controversial. Makes several contacts with the 16S rRNA in the 70S ribosome. This Clostridium beijerinckii (strain ATCC 51743 / NCIMB 8052) (Clostridium acetobutylicum) protein is Large ribosomal subunit protein uL2.